A 412-amino-acid polypeptide reads, in one-letter code: P-selectin glycoprotein ligand 1 (412 aa).

The first 17 residues, 1–17, serve as a signal peptide directing secretion; sequence MPLQLLLLLILLGPGNS. The propeptide occupies 18 to 41; it reads LQLWDTWADEAEKALGPLLARDRR. At 18–320 the chain is on the extracellular side; it reads LQLWDTWADE…APDHISVKQC (303 aa). Gln-42 is subject to Pyrrolidone carboxylic acid. Residues Tyr-46, Tyr-48, and Tyr-51 each carry the sulfotyrosine modification. A disordered region spans residues 56–95; that stretch reads ETEPPEMLRNSTDTTPLTGPGTPESTTVEPAARRSTGLDA. Thr-57 is a glycosylation site (O-linked (GalNAc...) threonine). N-linked (GlcNAc...) asparagine glycosylation occurs at Asn-65. Low complexity predominate over residues 66–82; that stretch reads STDTTPLTGPGTPESTT. N-linked (GlcNAc...) asparagine glycosylation is present at Asn-111. 12 consecutive repeat copies span residues 122-131, 132-141, 142-151, 162-171, 182-191, 192-201, 202-211, 212-221, 222-231, 232-241, 242-251, and 252-261. The tract at residues 122-261 is 12 X 10 AA tandem repeats; sequence QTTQPAATEA…QTTPLAAMEA (140 aa). 2 disordered regions span residues 125 to 146 and 166 to 252; these read QPAATEAQTTQPVPTEAQTTPL and LAAT…TEAQ. N-linked (GlcNAc...) asparagine glycosylation occurs at Asn-302. The helical transmembrane segment at 321–341 threads the bilayer; it reads LLAILILALVATIFFVCTVVL. Over 342-412 the chain is Cytoplasmic; that stretch reads AVRLSRKGHM…DDLTLHSFLP (71 aa). Residues 374 to 412 are disordered; it reads EGPSATANGGLSKAKSPGLTPEPREDREGDDLTLHSFLP. The span at 395–406 shows a compositional bias: basic and acidic residues; sequence EPREDREGDDLT. Thr-406 bears the Phosphothreonine mark. Residue Ser-409 is modified to Phosphoserine.

In terms of assembly, homodimer; disulfide-linked. Interaction with P-, E- and L-selectins, through their lectin/EGF domains, is required for promoting recruitment and rolling of leukocytes. These interactions require sialyl Lewis X glycan modification but there is a differing dependence for tyrosine sulfations. Sulfation on Tyr-51 of PSGL1 is most important for high affinity L-selectin/SELL binding while P-selectin/SELP requires sulfation on Tyr-48. E-selectin/SELE binds with much lower affinity and requires the sLe(x) epitope, but apparently not tyrosine sulfation. Dimerization appears not to be required for P-selectin/SELP binding. Interacts with SNX20. Interacts with MSN and SYK; mediates the activation of SYK by SELPLG. Interacts with HAVCR1. (Microbial infection) Interacts with enterovirus 71 capsid proteins. As to quaternary structure, (Microbial infection) Interacts with Staphylococcus aureus proteins SSL5 and SSL11; these interactions prevent SELPLG-mediated neutrophil rolling. In terms of processing, displays complex, core-2, sialylated and fucosylated O-linked oligosaccharides, at least some of which appear to contain poly-N-acetyllactosamine with varying degrees of substitution. Mainly disialylated or neutral forms of the core-2 tetrasaccharide, Galbeta1--&gt;4GlcNAcbeta1--&gt;6(Galbeta1--&gt;3)GalNAcOH. The GlcN:GalN ratio is approximately 2:1 and the Man:Fuc ratio 3:5. Contains about 14% fucose with alpha-1,3 linkage present in two forms: One species is a disialylated, monofucosylated glycan, and the other, a monosialylated, trifucosylated glycan with a polylactosamine backbone. The fucosylated forms carry the Lewis antigen and are important for interaction with selectins and for functioning in leukocyte rolling. The modification containing the sialyl Lewis X glycan is on Thr-57. No sulfated O-glycans. Some N-glycosylation. Post-translationally, sulfation, in conjunction with the SLe(x)-containing glycan, is necessary for P- and L-selectin binding. High affinity P-selectin binding has a preferred requirement for the isomer sulfated on both Tyr-48 and Tyr-51, whereas L-selectin binding requires predominantly sulfation on Tyr-51 with sulfation on Tyr-48 playing only a minor role. These sulfations play an important role in L- and P-selectin-mediated neutrophil recruitment, and leukocyte rolling. As to expression, expressed on neutrophils, monocytes and most lymphocytes.

The protein localises to the membrane. An SLe(x)-type proteoglycan, which through high affinity, calcium-dependent interactions with E-, P- and L-selectins, mediates rapid rolling of leukocytes over vascular surfaces during the initial steps in inflammation. Critical for the initial leukocyte capture. In terms of biological role, (Microbial infection) Acts as a receptor for enterovirus 71. This is P-selectin glycoprotein ligand 1 (SELPLG) from Homo sapiens (Human).